Here is a 348-residue protein sequence, read N- to C-terminus: Holliday junction branch migration complex subunit RuvB (348 aa).

The interval 1 to 183 (MAPQPRRLIA…FGIPIRLEYY (183 aa)) is large ATPase domain (RuvB-L). Residues Leu-22, Arg-23, Gly-64, Lys-67, Thr-68, Thr-69, 130-132 (EDF), Arg-173, Tyr-183, and Arg-220 contribute to the ATP site. Thr-68 contributes to the Mg(2+) binding site. Positions 184–254 (TVEELECIVR…VADRALRLLD (71 aa)) are small ATPAse domain (RuvB-S). The interval 257-348 (HIGLDQMDRR…FQLFSEGGEE (92 aa)) is head domain (RuvB-H). Residues Arg-293, Arg-312, and Arg-317 each coordinate DNA.

It belongs to the RuvB family. In terms of assembly, homohexamer. Forms an RuvA(8)-RuvB(12)-Holliday junction (HJ) complex. HJ DNA is sandwiched between 2 RuvA tetramers; dsDNA enters through RuvA and exits via RuvB. An RuvB hexamer assembles on each DNA strand where it exits the tetramer. Each RuvB hexamer is contacted by two RuvA subunits (via domain III) on 2 adjacent RuvB subunits; this complex drives branch migration. In the full resolvosome a probable DNA-RuvA(4)-RuvB(12)-RuvC(2) complex forms which resolves the HJ.

It localises to the cytoplasm. It catalyses the reaction ATP + H2O = ADP + phosphate + H(+). Functionally, the RuvA-RuvB-RuvC complex processes Holliday junction (HJ) DNA during genetic recombination and DNA repair, while the RuvA-RuvB complex plays an important role in the rescue of blocked DNA replication forks via replication fork reversal (RFR). RuvA specifically binds to HJ cruciform DNA, conferring on it an open structure. The RuvB hexamer acts as an ATP-dependent pump, pulling dsDNA into and through the RuvAB complex. RuvB forms 2 homohexamers on either side of HJ DNA bound by 1 or 2 RuvA tetramers; 4 subunits per hexamer contact DNA at a time. Coordinated motions by a converter formed by DNA-disengaged RuvB subunits stimulates ATP hydrolysis and nucleotide exchange. Immobilization of the converter enables RuvB to convert the ATP-contained energy into a lever motion, pulling 2 nucleotides of DNA out of the RuvA tetramer per ATP hydrolyzed, thus driving DNA branch migration. The RuvB motors rotate together with the DNA substrate, which together with the progressing nucleotide cycle form the mechanistic basis for DNA recombination by continuous HJ branch migration. Branch migration allows RuvC to scan DNA until it finds its consensus sequence, where it cleaves and resolves cruciform DNA. This chain is Holliday junction branch migration complex subunit RuvB, found in Methylocella silvestris (strain DSM 15510 / CIP 108128 / LMG 27833 / NCIMB 13906 / BL2).